Reading from the N-terminus, the 142-residue chain is Transmembrane protein 170A (142 aa).

Over 1–48 (MEGGGGGLGGEPGLLQQILSLRLVPRVGNVTDCQRATLCSFPEMWYGV) the chain is Lumenal. The N-linked (GlcNAc...) asparagine glycan is linked to Asn29. The chain crosses the membrane as a helical span at residues 49–69 (FLWALVSSLFFHIPAGLLALF). Residues 70–78 (TLRHHKYGR) lie on the Cytoplasmic side of the membrane. The chain crosses the membrane as a helical span at residues 79–99 (FMSVGIFLMGVLGPISAGILT). The Lumenal portion of the chain corresponds to 100–114 (SAAIAGVYKAAGKEM). Residues 115 to 135 (IPFEALVLGVGQTFCVLIVSF) traverse the membrane as a helical segment. Residues 136–142 (LRILATL) are Cytoplasmic-facing.

It belongs to the TMEM170 family.

Its subcellular location is the endoplasmic reticulum membrane. It localises to the nucleus envelope. May regulate membrane morphogenesis in the endoplasmic reticulum (ER) by promoting ER sheet formation at the expense of ER tubules. The chain is Transmembrane protein 170A (tmem170a) from Xenopus laevis (African clawed frog).